We begin with the raw amino-acid sequence, 256 residues long: Protein FixA (256 aa).

It belongs to the ETF beta-subunit/FixA family. In terms of assembly, heterodimer of FixA and FixB.

It functions in the pathway amine and polyamine metabolism; carnitine metabolism. Its function is as follows. Required for anaerobic carnitine reduction. May bring reductant to CaiA. This chain is Protein FixA, found in Shigella flexneri serotype 5b (strain 8401).